The chain runs to 291 residues: uncharacterized protein (291 aa).

Disordered stretches follow at residues methionine 1–lysine 62, proline 220–valine 242, and glutamate 255–lysine 291. The span at glutamate 18–serine 41 shows a compositional bias: basic and acidic residues. 2 stretches are compositionally biased toward polar residues: residues glutamate 42–aspartate 58 and proline 226–proline 236. Serine 267 carries the phosphoserine modification.

It localises to the cytoplasm. The protein resides in the nucleus. This is an uncharacterized protein from Saccharomyces cerevisiae (strain ATCC 204508 / S288c) (Baker's yeast).